A 317-amino-acid polypeptide reads, in one-letter code: CXXC-type zinc finger protein 5 (317 aa).

Over residues 1–49 the composition is skewed to low complexity; sequence MSSLSSGPQDTGGSSSSSSNGSSGSGPKAGVADKSAAVAAAAPASVADD. The disordered stretch occupies residues 1-96; sequence MSSLSSGPQD…GSGGGSMMGG (96 aa). Gly residues predominate over residues 83–94; it reads GGSGGSGGGSMM. The CXXC-type zinc finger occupies 251-292; that stretch reads GKKKRKRCGMCAPCRRRINCEQCSSCRNRKTGHQICKFRKCE. Residues 252-257 carry the Nuclear localization signal motif; sequence KKKRKR. Positions 258, 261, 264, 270, 273, 276, 286, and 291 each coordinate Zn(2+).

In terms of assembly, interacts with DVL1. Interacts with RBPJ.

It is found in the nucleus. Its subcellular location is the cytoplasm. Its function is as follows. May indirectly participate in activation of the NF-kappa-B and MAPK pathways. Acts as a mediator of BMP4-mediated modulation of canonical Wnt signaling activity in neural stem cells. Required for DNA damage-induced ATM phosphorylation, p53 activation and cell cycle arrest. Involved in myelopoiesis. Binds to the oxygen responsive element of COX4I2 and represses its transcription under hypoxia conditions (4% oxygen), as well as normoxia conditions (20% oxygen). May repress COX4I2 transactivation induced by CHCHD2 and RBPJ. Binds preferentially to DNA containing cytidine-phosphate-guanosine (CpG) dinucleotides over CpH (H=A, T, and C), hemimethylated-CpG and hemimethylated-hydroxymethyl-CpG. This chain is CXXC-type zinc finger protein 5 (CXXC5), found in Bos taurus (Bovine).